We begin with the raw amino-acid sequence, 482 residues long: Putative dipeptidase NECHADRAFT_87110 (482 aa).

Over residues 1–21 the composition is skewed to polar residues; the sequence is MADTQTPNLQNTAEGDANTSA. The disordered stretch occupies residues 1 to 24; that stretch reads MADTQTPNLQNTAEGDANTSAENE. Asparagine 18 carries an N-linked (GlcNAc...) asparagine glycan. The helical transmembrane segment at 41–61 threads the bilayer; the sequence is WLRYPFLVAGIALFLGPFSFF. Residues histidine 90, aspartate 92, and glutamate 201 each coordinate Zn(2+). Cysteine 141 and cysteine 230 form a disulfide bridge. Residue histidine 228 coordinates substrate. Histidine 272 and histidine 293 together coordinate Zn(2+). Substrate contacts are provided by arginine 304 and aspartate 364.

This sequence belongs to the metallo-dependent hydrolases superfamily. Peptidase M19 family. Requires Zn(2+) as cofactor.

The protein localises to the membrane. It catalyses the reaction an L-aminoacyl-L-amino acid + H2O = 2 an L-alpha-amino acid. Hydrolyzes a wide range of dipeptides. The protein is Putative dipeptidase NECHADRAFT_87110 of Fusarium vanettenii (strain ATCC MYA-4622 / CBS 123669 / FGSC 9596 / NRRL 45880 / 77-13-4) (Fusarium solani subsp. pisi).